The primary structure comprises 90 residues: UPF0298 protein YlbG (90 aa).

Belongs to the UPF0298 family.

It localises to the cytoplasm. The protein is UPF0298 protein YlbG (ylbG) of Bacillus subtilis (strain 168).